The sequence spans 196 residues: Mpv17-like protein (196 aa).

Residues 1–16 (MVSWWQALTRAAGRYP) are Cytoplasmic-facing. The tract at residues 16–55 (PWPANVLLYAGFFSGGDALQQVLRGGPADWQHTRHVATVA) is targeting to peroxisomes. A helical membrane pass occupies residues 17–34 (WPANVLLYAGFFSGGDAL). The Lumenal portion of the chain corresponds to 35–50 (QQVLRGGPADWQHTRH). A helical membrane pass occupies residues 51–67 (VATVAVAFHANLNYVWL). Residues 68–90 (NLLERALPGRAPRTILAKVLCDQ) lie on the Cytoplasmic side of the membrane. The helical transmembrane segment at 91–108 (ALGGPVYVSTFYAGMSIL) threads the bilayer. At 109-150 (QGKDDIFLDMRQKFWNTYKSGLMYWPFVQLINFSLIPIRWRT) the chain is on the lumenal side. Residues 151–167 (AYTGLCGFLWATFLCFS) traverse the membrane as a helical segment. The Cytoplasmic portion of the chain corresponds to 168–196 (QQEGDGTFKSAFTFRRIKVTNEVEKPSEK).

The protein belongs to the peroxisomal membrane protein PXMP2/4 family.

Its subcellular location is the peroxisome membrane. Its function is as follows. Participates in reactive oxygen species metabolism by up- or down-regulation of the genes of antioxidant enzymes. Protective against the mitochondrial apoptotic cascade. The sequence is that of Mpv17-like protein (MPV17L) from Bos taurus (Bovine).